A 127-amino-acid polypeptide reads, in one-letter code: Ribosome-binding factor A (127 aa).

This sequence belongs to the RbfA family. Monomer. Binds 30S ribosomal subunits, but not 50S ribosomal subunits or 70S ribosomes.

Its subcellular location is the cytoplasm. Functionally, one of several proteins that assist in the late maturation steps of the functional core of the 30S ribosomal subunit. Associates with free 30S ribosomal subunits (but not with 30S subunits that are part of 70S ribosomes or polysomes). Required for efficient processing of 16S rRNA. May interact with the 5'-terminal helix region of 16S rRNA. This chain is Ribosome-binding factor A, found in Aromatoleum aromaticum (strain DSM 19018 / LMG 30748 / EbN1) (Azoarcus sp. (strain EbN1)).